A 100-amino-acid polypeptide reads, in one-letter code: Large ribosomal subunit protein uL23 (100 aa).

This sequence belongs to the universal ribosomal protein uL23 family. In terms of assembly, part of the 50S ribosomal subunit. Contacts protein L29, and trigger factor when it is bound to the ribosome.

In terms of biological role, one of the early assembly proteins it binds 23S rRNA. One of the proteins that surrounds the polypeptide exit tunnel on the outside of the ribosome. Forms the main docking site for trigger factor binding to the ribosome. This chain is Large ribosomal subunit protein uL23, found in Shewanella denitrificans (strain OS217 / ATCC BAA-1090 / DSM 15013).